The following is a 27-amino-acid chain: Nemertide alpha-8 (27 aa).

Intrachain disulfides connect Cys-2–Cys-16, Cys-9–Cys-20, and Cys-15–Cys-26.

Belongs to the nemertide family. As to expression, confined to the epidermis and to the mucus layer.

The protein resides in the secreted. In terms of biological role, highly potent toxin against both insect and some mammalian sodium channels (Nav). It potently inhibits inactivation of insect sodium channels of B.germanica (BgNav1) and also delays the inactivation of mammalian Nav with potent activity on Nav1.3/SCN3A and Nav1.4/SCN4A. 1 uM is enough to completely inhibits the inactivation, resulting in sustained non-inactivating currents. In addition, the toxin significantly enhances the recovery from inactivation, and the open state is not required for the toxin to interact with the channel. In vivo, injection into brine shrimp (Artemia salina) stops movement or causes death after 24 hours (EC(50)=0.4 uM). This Riseriellus occultus (Ribbon worm) protein is Nemertide alpha-8.